We begin with the raw amino-acid sequence, 370 residues long: Tyrosine-protein kinase transforming protein SEA (370 aa).

A Protein kinase domain is found at 60-323 (THRSRVIGRG…GLVCELERVL (264 aa)). ATP-binding positions include 66–74 (IGRGHFGSV) and K92. The active-site Proton acceptor is D186. Y216 carries the phosphotyrosine; by autocatalysis modification. The segment at 345–370 (PPFPPAPRGQLPDSEDEEDEEEEVAE) is disordered. Residues 357–370 (DSEDEEDEEEEVAE) show a composition bias toward acidic residues.

The protein belongs to the protein kinase superfamily. Tyr protein kinase family.

It carries out the reaction L-tyrosyl-[protein] + ATP = O-phospho-L-tyrosyl-[protein] + ADP + H(+). This chain is Tyrosine-protein kinase transforming protein SEA (V-SEA), found in Galliformes.